A 47-amino-acid chain; its full sequence is Mu-theraphotoxin-An1a (47 aa).

Disulfide bonds link Cys-4–Cys-34, Cys-8–Cys-39, and Cys-22–Cys-44.

Contains 3 disulfide bonds. In terms of tissue distribution, expressed by the venom gland.

The protein localises to the secreted. Is toxic to insects. Reduces amplitude and frequency of spontaneous firing and inhibits voltage-gated sodium current (Nav) in the dorsal unpaired median (DUM) neurons of P.americana. This is Mu-theraphotoxin-An1a from Acanthoscurria natalensis (Tarantula spider).